Consider the following 535-residue polypeptide: CTP synthase (535 aa).

The segment at 1 to 267 is amidoligase domain; the sequence is MTKYIFVTGG…DQIVCDHLKL (267 aa). Ser13 serves as a coordination point for CTP. UTP is bound at residue Ser13. 14 to 19 contacts ATP; the sequence is SLGKGI. Tyr54 lines the L-glutamine pocket. Asp71 provides a ligand contact to ATP. Mg(2+) is bound by residues Asp71 and Glu141. CTP is bound by residues 148–150, 188–193, and Lys224; these read DIE and KTKPTQ. Residues 188 to 193 and Lys224 contribute to the UTP site; that span reads KTKPTQ. 240-242 serves as a coordination point for ATP; that stretch reads RDA. In terms of domain architecture, Glutamine amidotransferase type-1 spans 292–534; it reads KIALVGKYVE…VRASITNKES (243 aa). Gly354 is an L-glutamine binding site. The active-site Nucleophile; for glutamine hydrolysis is the Cys381. Residues 382-385, Glu405, and Arg462 each bind L-glutamine; that span reads LGMQ. Catalysis depends on residues His507 and Glu509.

It belongs to the CTP synthase family. Homotetramer.

The enzyme catalyses UTP + L-glutamine + ATP + H2O = CTP + L-glutamate + ADP + phosphate + 2 H(+). The catalysed reaction is L-glutamine + H2O = L-glutamate + NH4(+). It catalyses the reaction UTP + NH4(+) + ATP = CTP + ADP + phosphate + 2 H(+). The protein operates within pyrimidine metabolism; CTP biosynthesis via de novo pathway; CTP from UDP: step 2/2. Allosterically activated by GTP, when glutamine is the substrate; GTP has no effect on the reaction when ammonia is the substrate. The allosteric effector GTP functions by stabilizing the protein conformation that binds the tetrahedral intermediate(s) formed during glutamine hydrolysis. Inhibited by the product CTP, via allosteric rather than competitive inhibition. Catalyzes the ATP-dependent amination of UTP to CTP with either L-glutamine or ammonia as the source of nitrogen. Regulates intracellular CTP levels through interactions with the four ribonucleotide triphosphates. This is CTP synthase from Bacillus cereus (strain AH187).